A 410-amino-acid chain; its full sequence is Transcription termination factor, mitochondrial (410 aa).

The N-terminal 44 residues, 1–44 (MIRSLLRSFETALKLHAGLNMHPMHCSRRLLFSQYENRASPSRL), are a transit peptide targeting the mitochondrion.

This sequence belongs to the mTERF family.

The protein localises to the mitochondrion. Its function is as follows. Transcription termination factor. Binds promoter DNA and regulates mitochondrial replication and transcription. Transcription termination activity may be polarized with highest termination activity occurring when its DNA-binding site is positioned in the reverse orientation with respect to the incoming RNA polymerase. Required for normal topology and maintenance of mitochondrial DNA (mtDNA) levels. Regulates mtDNA replication by promoting replication pausing, possibly by acting as a natural barrier to replication fork progression. Its function in replication pausing prevents unregulated replication that may occur for example by collisions between the machineries of DNA replication and transcription during mtDNA synthesis. This ensures the incorporation of RNA transcripts into replication intermediates at the replication fork and allow for proper fork progression. Shares mtDNA binding sites with the mitochondrial termination factor mTerf5 and thereby may antagonize mTerf5 function during replication to regulate pausing. Likely to function downstream of Dref which activates genes involved in mtDNA replication and maintenance. This Drosophila melanogaster (Fruit fly) protein is Transcription termination factor, mitochondrial.